The following is a 584-amino-acid chain: Glutathione hydrolase proenzyme (584 aa).

The signal sequence occupies residues Met1–Ala25. An N-linked (GlcNAc...) asparagine glycan is attached at Asn111. Arg120 provides a ligand contact to L-glutamate. N-linked (GlcNAc...) asparagine glycans are attached at residues Asn135, Asn262, Asn272, Asn350, and Asn370. Thr395 acts as the Nucleophile in catalysis. L-glutamate-binding positions include Thr413, Glu434, and Ser465–Ser466. N-linked (GlcNAc...) asparagine glycosylation is present at Asn547.

This sequence belongs to the gamma-glutamyltransferase family. As to quaternary structure, heterodimer composed of the light and heavy chains. The active site is located in the light chain. Cleaved by autocatalysis into a large and a small subunit and the autocatalytic cleavage is essential to the functional activation of the enzyme.

It localises to the secreted. It catalyses the reaction an N-terminal (5-L-glutamyl)-[peptide] + an alpha-amino acid = 5-L-glutamyl amino acid + an N-terminal L-alpha-aminoacyl-[peptide]. The catalysed reaction is glutathione + H2O = L-cysteinylglycine + L-glutamate. It carries out the reaction an S-substituted glutathione + H2O = an S-substituted L-cysteinylglycine + L-glutamate. The enzyme catalyses leukotriene C4 + H2O = leukotriene D4 + L-glutamate. It functions in the pathway sulfur metabolism; glutathione metabolism. Functionally, cleaves the gamma-glutamyl bond of extracellular glutathione (gamma-Glu-Cys-Gly), glutathione conjugates, and other gamma-glutamyl compounds. The metabolism of glutathione releases free glutamate and the dipeptide cysteinyl-glycine, which is hydrolyzed to cysteine and glycine by dipeptidases. In the presence of high concentrations of dipeptides and some amino acids, can also catalyze a transpeptidation reaction, transferring the gamma-glutamyl moiety to an acceptor amino acid to form a new gamma-glutamyl compound. Initiates extracellular glutathione (GSH) breakdown, provides cells with a local cysteine supply and contributes to maintain intracellular GSH level. It is part of the cell antioxidant defense mechanism. In Arthroderma benhamiae (strain ATCC MYA-4681 / CBS 112371) (Trichophyton mentagrophytes), this protein is Glutathione hydrolase proenzyme.